Consider the following 395-residue polypeptide: MRGQAANLVLATWISVVNFWAWNLIGPLSTSYARDMSLSSAEASLLVATPILVGALGRIVTGPLTDRFGGRAMLIAVTLASILPVLAVGVAATMGSYALLVFFGLFLGVAGTIFAVGIPFANNWYQPARRGFSTGVFGMGMVGTALSAFFTPRFVRWFGLFTTHAIVAAALASTAVVAMVVLRDAPYFRPNADPVLPRLKAAARLPVTWEMSFLYAIVFGGFVAFSNYLPTYITTIYGFSTVDAGARTAGFALAAVLARPVGGWLSDRIAPRHVVLASLAGTALLAFAAALQPPPEVWSAATFITLAVCLGVGTGGVFAWVARRAPAASVGSVTGIVAAAGGLGGYFPPLVMGATYDPVDNDYTVGLLLLVATALVACTYTALHAREPVSEEASR.

Helical transmembrane passes span 8–28, 45–65, 72–92, 98–118, 131–151, 157–177, 205–225, 244–266, 274–294, 301–321, 333–353, and 365–385; these read LVLATWISVVNFWAWNLIGPL, LLVATPILVGALGRIVTGPLT, AMLIAVTLASILPVLAVGVAA, ALLVFFGLFLGVAGTIFAVGI, GFSTGVFGMGMVGTALSAFFT, WFGLFTTHAIVAAALASTAVV, LPVTWEMSFLYAIVFGGFVAF, AGARTAGFALAAVLARPVGGWLS, VVLASLAGTALLAFAAALQPP, ATFITLAVCLGVGTGGVFAWV, VTGIVAAAGGLGGYFPPLVMG, and VGLLLLVATALVACTYTALHA.

Belongs to the major facilitator superfamily. Nitrate/nitrite porter (TC 2.A.1.8) family.

It is found in the cell membrane. Involved in excretion of nitrite produced by the dissimilatory reduction of nitrate. This chain is Probable nitrate/nitrite transporter NarK2 (narK2), found in Mycobacterium tuberculosis (strain CDC 1551 / Oshkosh).